The primary structure comprises 752 residues: Neuroendocrine convertase 1 (752 aa).

An N-terminal signal peptide occupies residues 1–27; that stretch reads MKQRGWTLQCTAFTLFCVWCALNSVKA. Positions 28 to 110 are excised as a propeptide; sequence KRQFVNEWAA…QQYEKERRKR (83 aa). A Peptidase S8 domain is found at 129-450; the sequence is QWYLQDTRMT…FGLLNAKALV (322 aa). The Charge relay system role is filled by aspartate 167. An N-linked (GlcNAc...) asparagine glycan is attached at asparagine 173. Residue histidine 208 is the Charge relay system of the active site. 2 disulfides stabilise this stretch: cysteine 225-cysteine 374 and cysteine 317-cysteine 347. Serine 382 (charge relay system) is an active-site residue. Asparagine 401 carries N-linked (GlcNAc...) asparagine glycosylation. Residues 460–597 enclose the P/Homo B domain; sequence NVPEKKECII…KLILHGTSSQ (138 aa). The cysteines at positions 467 and 494 are disulfide-linked. The segment at 631–662 is disordered; that stretch reads PTQNSLNGNLLVPKNSSSSSVEDRRDEQVQGA. The N-linked (GlcNAc...) asparagine glycan is linked to asparagine 645.

Belongs to the peptidase S8 family. Furin subfamily. Ca(2+) serves as cofactor.

Its subcellular location is the cytoplasmic vesicle. It is found in the secretory vesicle. The catalysed reaction is Release of protein hormones, neuropeptides and renin from their precursors, generally by hydrolysis of -Lys-Arg-|- bonds.. Its function is as follows. Involved in the processing of hormone and other protein precursors at sites comprised of pairs of basic amino acid residues. Substrates include POMC, renin, enkephalin, dynorphin, somatostatin, insulin and AGRP. This is Neuroendocrine convertase 1 (Pcsk1) from Rattus norvegicus (Rat).